We begin with the raw amino-acid sequence, 493 residues long: Solute carrier family 2, facilitated glucose transporter member 3 (493 aa).

The Cytoplasmic segment spans residues 1 to 10; the sequence is MGTAKVTPSL. The chain crosses the membrane as a helical span at residues 11–32; that stretch reads VFAVTVATIGSFQFGYNTGVIN. Residues 33–64 are Extracellular-facing; sequence APETIIKDFLNYTLEERLEDLPREGLLTTLWS. An N-linked (GlcNAc...) asparagine glycan is attached at Asn-43. A helical transmembrane segment spans residues 65-85; that stretch reads LCVAIFSVGGMIGSFSVGLFV. The Cytoplasmic segment spans residues 86-90; sequence NRFGR. A helical transmembrane segment spans residues 91–111; the sequence is RNSMLLVNLIAILGGCLMGFA. Over 112–118 the chain is Extracellular; the sequence is KIAESVE. The helical transmembrane segment at 119–142 threads the bilayer; the sequence is MLILGRLIIGIFCGLCTGFVPMYI. The Cytoplasmic portion of the chain corresponds to 143–153; that stretch reads GEVSPTALRGA. A helical transmembrane segment spans residues 154 to 174; sequence FGTLNQLGIVVGILVAQVFGL. Gln-159 provides a ligand contact to D-glucose. The Extracellular segment spans residues 175-183; that stretch reads DFILGSEEL. The helical transmembrane segment at 184–204 threads the bilayer; it reads WPGLLGLTIIPAILQSAALPF. Residues 205–269 lie on the Cytoplasmic side of the membrane; sequence CPESPRFLLI…LFKSPSYFQP (65 aa). Thr-232 bears the Phosphothreonine mark. Residues 270–290 form a helical membrane-spanning segment; sequence LLISVVLQLSQQFSGINAVFY. The segment at 277–279 is important for selectivity against fructose; it reads QLS. Residues 280–281 and Asn-286 contribute to the D-glucose site; that span reads QQ. The Extracellular portion of the chain corresponds to 291–304; that stretch reads YSTGIFQDAGVQEP. A helical membrane pass occupies residues 305–325; it reads IYATIGAGVVNTIFTVVSLFL. Asn-315 is a binding site for D-glucose. Topologically, residues 326 to 331 are cytoplasmic; the sequence is VERAGR. A helical membrane pass occupies residues 332 to 352; the sequence is RTLHMIGLGGMAVCSVFMTIS. The Extracellular portion of the chain corresponds to 353–363; the sequence is LLLKDEYEAMS. A helical transmembrane segment spans residues 364–389; sequence FVCIVAILVYVAFFEIGPGPIPWFIV. Glu-378 and Trp-386 together coordinate D-glucose. Over 390–399 the chain is Cytoplasmic; it reads AELFSQGPRP. Residues 400 to 420 traverse the membrane as a helical segment; the sequence is AAMAVAGCSNWTSNFLVGMFF. Over 421-429 the chain is Extracellular; the sequence is PSAAAYLGA. Residues 430–450 traverse the membrane as a helical segment; the sequence is YVFIIFAAFLVFFLIFTSFKV. At 451 to 493 the chain is on the cytoplasmic side; that stretch reads PETKGRTFEDITRAFEGQAHSGKGSAGVELNSMQPVKETPGNA. Residues Ser-471, Ser-475, and Ser-482 each carry the phosphoserine modification. A Phosphothreonine modification is found at Thr-489.

Belongs to the major facilitator superfamily. Sugar transporter (TC 2.A.1.1) family. Glucose transporter subfamily. Interacts with SMIM43; the interaction may promote SLC2A3-mediated glucose transport to meet the energy needs of mesendoderm differentiation. In terms of tissue distribution, brain and osteoblastic cells (at protein level). Highly expressed in brain.

The protein resides in the cell membrane. Its subcellular location is the perikaryon. The protein localises to the cell projection. It carries out the reaction D-glucose(out) = D-glucose(in). The catalysed reaction is D-galactose(in) = D-galactose(out). Deoxyglucose transport is inhibited by D-glucose, D-galactose and maltose. Galactose transport is inhibited by D-glucose and maltose. In terms of biological role, facilitative glucose transporter. Can also mediate the uptake of various other monosaccharides across the cell membrane. Mediates the uptake of glucose, 2-deoxyglucose, galactose, mannose, xylose and fucose, and probably also dehydroascorbate. Does not mediate fructose transport. Required for mesendoderm differentiation. The protein is Solute carrier family 2, facilitated glucose transporter member 3 of Rattus norvegicus (Rat).